The chain runs to 137 residues: Lysozyme (137 aa).

Positions 1 to 20 (MQRLLGSIVILATVFTFCEA) are cleaved as a signal peptide. Residues 21–135 (TISSACLRCI…EKVHQQGCNV (115 aa)) enclose the I-type lysozyme domain. 6 disulfide bridges follow: cysteine 26–cysteine 102, cysteine 31–cysteine 37, cysteine 42–cysteine 51, cysteine 64–cysteine 84, cysteine 74–cysteine 80, and cysteine 98–cysteine 116. The active-site Proton donor is the glutamate 34. Aspartate 45 serves as the catalytic Nucleophile. 57–63 (KENYWED) is a substrate binding site. Substrate is bound by residues tyrosine 88 and 109-111 (HNG).

Belongs to the glycosyl hydrolase 22 family. Type-I lysozyme subfamily. Expressed in the basophil cells of the oyster digestive gland.

Its subcellular location is the secreted. It catalyses the reaction Hydrolysis of (1-&gt;4)-beta-linkages between N-acetylmuramic acid and N-acetyl-D-glucosamine residues in a peptidoglycan and between N-acetyl-D-glucosamine residues in chitodextrins.. Has bacteriolytic activity. May play a role in digestion and in the host defense mechanisms against invading microbes. The chain is Lysozyme (lysoz) from Magallana gigas (Pacific oyster).